The chain runs to 407 residues: Chorismate synthase (407 aa).

Positions 40 and 46 each coordinate NADP(+). FMN contacts are provided by residues 138 to 140 (RAS) and 259 to 260 (QA). Residues 275 to 284 (RRGSRAHDEM) are compositionally biased toward basic and acidic residues. Positions 275–308 (RRGSRAHDEMYPGTDGVVRSTNRAGGLEGGMTNG) are disordered. Residues Gly-303, 318-322 (KPIST), and Arg-344 each bind FMN.

Belongs to the chorismate synthase family. Homotetramer. FMNH2 serves as cofactor.

It carries out the reaction 5-O-(1-carboxyvinyl)-3-phosphoshikimate = chorismate + phosphate. It functions in the pathway metabolic intermediate biosynthesis; chorismate biosynthesis; chorismate from D-erythrose 4-phosphate and phosphoenolpyruvate: step 7/7. In terms of biological role, catalyzes the anti-1,4-elimination of the C-3 phosphate and the C-6 proR hydrogen from 5-enolpyruvylshikimate-3-phosphate (EPSP) to yield chorismate, which is the branch point compound that serves as the starting substrate for the three terminal pathways of aromatic amino acid biosynthesis. This reaction introduces a second double bond into the aromatic ring system. The sequence is that of Chorismate synthase from Mycobacterium marinum (strain ATCC BAA-535 / M).